The chain runs to 294 residues: Glutamyl-Q tRNA(Asp) synthetase (294 aa).

L-glutamate contacts are provided by residues 8-12 and Glu44; that span reads RFAPT. Residues 11–21 carry the 'HIGH' region motif; sequence PTPSGYLHFGS. Zn(2+)-binding residues include Cys100, Cys102, Tyr114, and Cys118. L-glutamate is bound by residues Tyr171 and Arg189. The short motif at 227–231 is the 'KMSKS' region element; sequence KLGKS. Position 230 (Lys230) interacts with ATP.

Belongs to the class-I aminoacyl-tRNA synthetase family. GluQ subfamily. Requires Zn(2+) as cofactor.

Functionally, catalyzes the tRNA-independent activation of glutamate in presence of ATP and the subsequent transfer of glutamate onto a tRNA(Asp). Glutamate is transferred on the 2-amino-5-(4,5-dihydroxy-2-cyclopenten-1-yl) moiety of the queuosine in the wobble position of the QUC anticodon. This Ectopseudomonas mendocina (strain ymp) (Pseudomonas mendocina) protein is Glutamyl-Q tRNA(Asp) synthetase.